The chain runs to 73 residues: ATP synthase subunit c (73 aa).

A run of 2 helical transmembrane segments spans residues 4–24 (LAIG…GIGI) and 51–71 (GALA…IIIF).

It belongs to the ATPase C chain family. F-type ATPases have 2 components, F(1) - the catalytic core - and F(0) - the membrane proton channel. F(1) has five subunits: alpha(3), beta(3), gamma(1), delta(1), epsilon(1). F(0) has three main subunits: a(1), b(2) and c(10-14). The alpha and beta chains form an alternating ring which encloses part of the gamma chain. F(1) is attached to F(0) by a central stalk formed by the gamma and epsilon chains, while a peripheral stalk is formed by the delta and b chains.

The protein resides in the cell membrane. Functionally, f(1)F(0) ATP synthase produces ATP from ADP in the presence of a proton or sodium gradient. F-type ATPases consist of two structural domains, F(1) containing the extramembraneous catalytic core and F(0) containing the membrane proton channel, linked together by a central stalk and a peripheral stalk. During catalysis, ATP synthesis in the catalytic domain of F(1) is coupled via a rotary mechanism of the central stalk subunits to proton translocation. In terms of biological role, key component of the F(0) channel; it plays a direct role in translocation across the membrane. A homomeric c-ring of between 10-14 subunits forms the central stalk rotor element with the F(1) delta and epsilon subunits. The polypeptide is ATP synthase subunit c (Caldanaerobacter subterraneus subsp. tengcongensis (strain DSM 15242 / JCM 11007 / NBRC 100824 / MB4) (Thermoanaerobacter tengcongensis)).